The sequence spans 776 residues: Lon protease (776 aa).

One can recognise a Lon N-terminal domain in the interval 12 to 209; that stretch reads LPIIALRGLW…LVYKFVIKEI (198 aa). 360-367 provides a ligand contact to ATP; sequence GPPGVGKT. The 181-residue stretch at 596–776 folds into the Lon proteolytic domain; it reads EDTVGVVNGL…VKEILDEVLI (181 aa). Residues Ser-683 and Lys-726 contribute to the active site.

This sequence belongs to the peptidase S16 family. In terms of assembly, homohexamer. Organized in a ring with a central cavity.

It is found in the cytoplasm. It carries out the reaction Hydrolysis of proteins in presence of ATP.. Functionally, ATP-dependent serine protease that mediates the selective degradation of mutant and abnormal proteins as well as certain short-lived regulatory proteins. Required for cellular homeostasis and for survival from DNA damage and developmental changes induced by stress. Degrades polypeptides processively to yield small peptide fragments that are 5 to 10 amino acids long. Binds to DNA in a double-stranded, site-specific manner. The polypeptide is Lon protease (Finegoldia magna (strain ATCC 29328 / DSM 20472 / WAL 2508) (Peptostreptococcus magnus)).